Consider the following 78-residue polypeptide: Translation initiation factor IF-1, chloroplastic (78 aa).

An S1-like domain is found at 1 to 73 (MASNRELIEM…TKGRIIYRLR (73 aa)).

Belongs to the IF-1 family. Component of the 30S ribosomal translation pre-initiation complex which assembles on the 30S ribosome in the order IF-2 and IF-3, IF-1 and N-formylmethionyl-tRNA(fMet); mRNA recruitment can occur at any time during PIC assembly.

Its subcellular location is the plastid. The protein localises to the chloroplast. In terms of biological role, one of the essential components for the initiation of protein synthesis. Stabilizes the binding of IF-2 and IF-3 on the 30S subunit to which N-formylmethionyl-tRNA(fMet) subsequently binds. Helps modulate mRNA selection, yielding the 30S pre-initiation complex (PIC). Upon addition of the 50S ribosomal subunit IF-1, IF-2 and IF-3 are released leaving the mature 70S translation initiation complex. The protein is Translation initiation factor IF-1, chloroplastic of Ostreococcus tauri.